We begin with the raw amino-acid sequence, 201 residues long: MANGQFTIRSAGPASVGLTGERRGAASASSSALSNVQGDVRDRPIPTSSSRLPNAAILRDSSEIASTGLRYVAATLHWSEIAPLSLINKNDLAPAAYDFETRNDAGNVTAKVGRAVPVPKQGRLGKMLASVPLSTRISRVNSDRRLPTDAENHPETRDPRKGRGSHGVTPALHEKIGTAFVRRLRKIRTVLFAVAARLGAR.

2 disordered regions span residues 28–51 and 139–171; these read ASSS…SSSR and RVNS…VTPA. Positions 141–161 are enriched in basic and acidic residues; sequence NSDRRLPTDAENHPETRDPRK.

This is Protein VirD3 (virD3) from Rhizobium radiobacter (Agrobacterium tumefaciens).